The sequence spans 121 residues: Pancreatic progenitor cell differentiation and proliferation factor (121 aa).

Disordered regions lie at residues 22 to 47 and 101 to 121; these read GSTS…PGLQ and SRQL…PPPS. Over residues 23 to 33 the composition is skewed to low complexity; it reads STSSNSSCGSS. Over residues 101-110 the composition is skewed to polar residues; that stretch reads SRQLSESSDS.

It belongs to the PPDPF family.

Functionally, probable regulator of exocrine pancreas development. The chain is Pancreatic progenitor cell differentiation and proliferation factor (ppdpf) from Salmo salar (Atlantic salmon).